The chain runs to 157 residues: ATP synthase subunit b', chloroplastic (157 aa).

Residues 26 to 43 (LMASQFLLIMLILDITFY) form a helical membrane-spanning segment.

Belongs to the ATPase B chain family. F-type ATPases have 2 components, F(1) - the catalytic core - and F(0) - the membrane proton channel. F(1) has five subunits: alpha(3), beta(3), gamma(1), delta(1), epsilon(1). F(0) has four main subunits: a(1), b(1), b'(1) and c(10-14). The alpha and beta chains form an alternating ring which encloses part of the gamma chain. F(1) is attached to F(0) by a central stalk formed by the gamma and epsilon chains, while a peripheral stalk is formed by the delta, b and b' chains.

It is found in the plastid. The protein localises to the chloroplast thylakoid membrane. Functionally, f(1)F(0) ATP synthase produces ATP from ADP in the presence of a proton or sodium gradient. F-type ATPases consist of two structural domains, F(1) containing the extramembraneous catalytic core and F(0) containing the membrane proton channel, linked together by a central stalk and a peripheral stalk. During catalysis, ATP synthesis in the catalytic domain of F(1) is coupled via a rotary mechanism of the central stalk subunits to proton translocation. In terms of biological role, component of the F(0) channel, it forms part of the peripheral stalk, linking F(1) to F(0). The b'-subunit is a diverged and duplicated form of b found in plants and photosynthetic bacteria. The chain is ATP synthase subunit b', chloroplastic from Cyanidium caldarium (Red alga).